The sequence spans 134 residues: Arginine decarboxylase proenzyme (134 aa).

Ser-82 acts as the Schiff-base intermediate with substrate; via pyruvic acid in catalysis. Pyruvic acid (Ser); by autocatalysis is present on Ser-82. The Proton acceptor; for processing activity role is filled by His-87. Cys-102 (proton donor; for catalytic activity) is an active-site residue.

This sequence belongs to the prokaryotic AdoMetDC family. Type 1 subfamily. Heterooctamer of four alpha and four beta chains arranged as a tetramer of alpha/beta heterodimers. Pyruvate is required as a cofactor. In terms of processing, is synthesized initially as an inactive proenzyme. Formation of the active enzyme involves a self-maturation process in which the active site pyruvoyl group is generated from an internal serine residue via an autocatalytic post-translational modification. Two non-identical subunits are generated from the proenzyme in this reaction, and the pyruvate is formed at the N-terminus of the alpha chain, which is derived from the carboxyl end of the proenzyme. The post-translation cleavage follows an unusual pathway, termed non-hydrolytic serinolysis, in which the side chain hydroxyl group of the serine supplies its oxygen atom to form the C-terminus of the beta chain, while the remainder of the serine residue undergoes an oxidative deamination to produce ammonia and the pyruvoyl group blocking the N-terminus of the alpha chain.

It catalyses the reaction L-arginine + H(+) = agmatine + CO2. It functions in the pathway amine and polyamine biosynthesis; agmatine biosynthesis; agmatine from L-arginine: step 1/1. Its function is as follows. Specifically catalyzes the decarboxylation of L-arginine to agmatine. Has no S-adenosylmethionine decarboxylase (AdoMetDC) activity. This Saccharolobus islandicus (strain M.16.4 / Kamchatka #3) (Sulfolobus islandicus) protein is Arginine decarboxylase proenzyme.